Here is a 112-residue protein sequence, read N- to C-terminus: uncharacterized protein (112 aa).

This is an uncharacterized protein from Gallus gallus (Chicken).